The following is a 1664-amino-acid chain: Cortactin-binding protein 2 (1664 aa).

Disordered stretches follow at residues 1-23 (MATDGASCEPDLSRAPEDAAGAA), 268-440 (QLKR…ALHP), 455-479 (GNANDPDQNGNTTQSPPSRDVSPTS), and 495-618 (QALS…KPSI). The stretch at 119–276 (RKMQERMSTQ…EQLKRGSDSK (158 aa)) forms a coiled coil. 2 stretches are compositionally biased toward low complexity: residues 368–379 (SSAPTIPAASAS) and 395–407 (TSSTPPIPSGTTP). Arg499 is modified (asymmetric dimethylarginine). 6 ANK repeats span residues 710–740 (GRPTLLQQAAAQGNVTLLSMLLNEEGLDTNY), 744–773 (DGHSALYSAATNGHADCVRLLLNAEAQVNA), 777–806 (NGFTPLCAAAAQGHFECLELLLASDADVNH), 810–839 (GGQTPLYLACKNGNTDCIKLLLEAGTDRSI), 843–872 (DGWTPVHAAVDTGNVDSLKLLMYYQAPARG), and 913–943 (EGWTAAHIAASKGFKNCLEILCRHGGLEPEK). Residues 871 to 900 (RGNSSNEEEPESGAFARDGGEESSEGTSEP) form a disordered region. The disordered stretch occupies residues 1447-1483 (SKKKGESGAWRKVSTSPRKKSGRFSSPIWNEPDLSPG). Ser1525 carries the phosphoserine modification. The tract at residues 1558–1664 (RTFHSSGSNP…KHEQVEKPNT (107 aa)) is disordered. The segment covering 1587–1600 (PLSSHQATECSTSK) has biased composition (polar residues). The span at 1625–1639 (SQNTKRSSSSSNTRQ) shows a compositional bias: low complexity. A compositionally biased stretch (basic and acidic residues) spans 1646–1664 (SKEENWNLHKHEQVEKPNT).

Interacts with CTTN/cortactin SH3 domain. Interacts with STRN, STRN4/zinedin and MOB4/phocein; this interactions mediate the association with the STRIPAK core complex and may regulate dendritic spine distribution of the STRIPAK complex in hippocampal neurons. Activation of glutamate receptors weakens the interaction with STRN and STRN4.

The protein localises to the cytoplasm. The protein resides in the cell cortex. It is found in the cell projection. Its subcellular location is the dendritic spine. Regulates the dendritic spine distribution of CTTN/cortactin in hippocampal neurons, and thus controls dendritic spinogenesis and dendritic spine maintenance. Associates with the striatin-interacting phosphatase and kinase (STRIPAK) core complex to regulate dendritic spine distribution of the STRIPAK complex in hippocampal neurons. The sequence is that of Cortactin-binding protein 2 (CTTNBP2) from Oryctolagus cuniculus (Rabbit).